The chain runs to 48 residues: Keratin-associated protein 22-1 (48 aa).

Interacts with hair keratins.

In the hair cortex, hair keratin intermediate filaments are embedded in an interfilamentous matrix, consisting of hair keratin-associated proteins (KRTAP), which are essential for the formation of a rigid and resistant hair shaft through their extensive disulfide bond cross-linking with abundant cysteine residues of hair keratins. The matrix proteins include the high-sulfur and high-glycine-tyrosine keratins. The sequence is that of Keratin-associated protein 22-1 (KRTAP22-1) from Homo sapiens (Human).